The sequence spans 408 residues: Argininosuccinate synthase (408 aa).

Residues 16 to 24 (AYSGGLDTS) and alanine 44 each bind ATP. L-citrulline is bound by residues tyrosine 96 and serine 101. Glycine 126 contributes to the ATP binding site. Threonine 128, asparagine 132, and aspartate 133 together coordinate L-aspartate. Asparagine 132 is an L-citrulline binding site. L-citrulline-binding residues include arginine 136, serine 185, serine 194, glutamate 270, and tyrosine 282.

Belongs to the argininosuccinate synthase family. Type 1 subfamily. Homotetramer.

The protein resides in the cytoplasm. It carries out the reaction L-citrulline + L-aspartate + ATP = 2-(N(omega)-L-arginino)succinate + AMP + diphosphate + H(+). It participates in amino-acid biosynthesis; L-arginine biosynthesis; L-arginine from L-ornithine and carbamoyl phosphate: step 2/3. This Shewanella woodyi (strain ATCC 51908 / MS32) protein is Argininosuccinate synthase.